We begin with the raw amino-acid sequence, 460 residues long: MYLSVPHYPSLKFTAFQSHKRNFRVFAVATNEAANYLPEAPILIPDGPWKQIDGGVTAAKGFKAAGLYGGLRAKGEKPDLALVTCDVDAISAGAFTKNVVAAAPVLYCKKALDISETARAVLINAGQANAATGDAGYQDVIECVNNLSKILQIRPEEILVESTGVIGHRIKKDALLNSLPQLVRSLSSSVGGAASAAVAITTTDLVSKSVAIESQVGGSTIRIGGMAKGSGMIHPNMATMLGVVTTDAVVACDVWRKMVQISVDRSFNQITVDGDTSTNDTVIALSSGLSGFNSNIISSLKSREAGQLQECLDVVMQGLAKSIAWDGEGATCLIEITVSGASTEAEAAKVARSVAGSSLVKSAIYGRDPNWGRIAAAAGYAGVPFDQMKLKVSLGNILLMDGGEPQSFDRAAASNYLRRAGETHDTVRIFISIGDGQGEGRAWGCDLSYDYVKINAEYTT.

A chloroplast-targeting transit peptide spans 1–26 (MYLSVPHYPSLKFTAFQSHKRNFRVF). The substrate site is built by T202, K228, T239, E328, N455, and T460. T239 serves as the catalytic Nucleophile.

This sequence belongs to the ArgJ family. As to quaternary structure, heterodimer of an alpha and a beta chain.

It localises to the plastid. The protein resides in the chloroplast. It catalyses the reaction N(2)-acetyl-L-ornithine + L-glutamate = N-acetyl-L-glutamate + L-ornithine. The catalysed reaction is L-glutamate + acetyl-CoA = N-acetyl-L-glutamate + CoA + H(+). The protein operates within amino-acid biosynthesis; L-arginine biosynthesis; L-ornithine and N-acetyl-L-glutamate from L-glutamate and N(2)-acetyl-L-ornithine (cyclic): step 1/1. It participates in amino-acid biosynthesis; L-arginine biosynthesis; N(2)-acetyl-L-ornithine from L-glutamate: step 1/4. Catalyzes two activities which are involved in the cyclic version of arginine biosynthesis: the synthesis of acetylglutamate from glutamate and acetyl-CoA, and of ornithine by transacetylation between acetylornithine and glutamate. The sequence is that of Arginine biosynthesis bifunctional protein ArgJ, chloroplastic from Citrullus lanatus (Watermelon).